The following is a 137-amino-acid chain: Small heat shock protein IbpA (137 aa).

Positions 28 to 137 (SQSNGGYPPY…ANKPRRIEIN (110 aa)) constitute a sHSP domain.

Belongs to the small heat shock protein (HSP20) family. As to quaternary structure, monomer. Forms homomultimers of about 100-150 subunits at optimal growth temperatures. Conformation changes to monomers at high temperatures or high ionic concentrations.

The protein localises to the cytoplasm. In terms of biological role, associates with aggregated proteins, together with IbpB, to stabilize and protect them from irreversible denaturation and extensive proteolysis during heat shock and oxidative stress. Aggregated proteins bound to the IbpAB complex are more efficiently refolded and reactivated by the ATP-dependent chaperone systems ClpB and DnaK/DnaJ/GrpE. Its activity is ATP-independent. This is Small heat shock protein IbpA from Citrobacter koseri (strain ATCC BAA-895 / CDC 4225-83 / SGSC4696).